The following is a 311-amino-acid chain: Protoheme IX farnesyltransferase (311 aa).

A run of 9 helical transmembrane segments spans residues 32 to 52, 53 to 73, 104 to 124, 125 to 145, 153 to 173, 180 to 200, 224 to 244, 245 to 265, and 285 to 305; these read VMSL…VPIN, PWYG…AGAL, FIFG…FINW, FAAF…TIWL, IVIG…VTTG, FLLF…LSLF, KQIL…CFTG, LGGV…IYFA, and FFFS…ESLV.

Belongs to the UbiA prenyltransferase family. Protoheme IX farnesyltransferase subfamily.

It localises to the cell inner membrane. It carries out the reaction heme b + (2E,6E)-farnesyl diphosphate + H2O = Fe(II)-heme o + diphosphate. It functions in the pathway porphyrin-containing compound metabolism; heme O biosynthesis; heme O from protoheme: step 1/1. Functionally, converts heme B (protoheme IX) to heme O by substitution of the vinyl group on carbon 2 of heme B porphyrin ring with a hydroxyethyl farnesyl side group. This is Protoheme IX farnesyltransferase from Bartonella tribocorum (strain CIP 105476 / IBS 506).